The following is a 734-amino-acid chain: Polyribonucleotide nucleotidyltransferase (734 aa).

Mg(2+) contacts are provided by D503 and D509. One can recognise a KH domain in the interval 570-629 (PKLSTIQVPVDAIGMIIGKGGETIRSITEETGAQINVDDDGTVTISSPNGESAAAAIETI). One can recognise an S1 motif domain in the interval 639–713 (GTIYMGKVKD…GKIRYALSIK (75 aa)).

It belongs to the polyribonucleotide nucleotidyltransferase family. Mg(2+) serves as cofactor.

It is found in the cytoplasm. The catalysed reaction is RNA(n+1) + phosphate = RNA(n) + a ribonucleoside 5'-diphosphate. Its function is as follows. Involved in mRNA degradation. Catalyzes the phosphorolysis of single-stranded polyribonucleotides processively in the 3'- to 5'-direction. This chain is Polyribonucleotide nucleotidyltransferase, found in Chlorobium phaeobacteroides (strain BS1).